The sequence spans 526 residues: Dual specificity tyrosine-phosphorylation-regulated kinase 2 (526 aa).

Polar residues-rich tracts occupy residues 30–40 (TTQPNGLTTLG) and 60–70 (GSSSSLKSTDG). Residues 30–76 (TTQPNGLTTLGKSGLPVVQDRQSESAHRRQGSSSSLKSTDGTGKVKA) are disordered. Residue threonine 31 is modified to Phosphothreonine; by ATM. The Nuclear localization signal signature appears at 114-116 (KKR). The 314-residue stretch at 147–460 (YEVLKVIGKG…PSQALRHPWL (314 aa)) folds into the Protein kinase domain. ATP contacts are provided by residues 153–161 (IGKGSFGQV), lysine 176, and 226–229 (FELL). Aspartate 273 (proton acceptor) is an active-site residue. At tyrosine 307 the chain carries Phosphotyrosine. Serine 367 is modified (phosphoserine; by ATM). A disordered region spans residues 462 to 499 (RRLPKPPTGEKASAKRITESTGAITSISKLPPTSSSAS). Residues 480–499 (ESTGAITSISKLPPTSSSAS) show a composition bias toward polar residues.

The protein belongs to the protein kinase superfamily. CMGC Ser/Thr protein kinase family. MNB/DYRK subfamily. As to quaternary structure, interacts with MDM2. Requires Mg(2+) as cofactor. Mn(2+) serves as cofactor. Post-translationally, phosphorylated on serine/threonine residues. Phosphorylation on Thr-31 and Ser-367 by ATM in response to genotoxic stress disrupts MDM2 binding and prevents MDM2-mediated ubiquitination and subsequent proteasome degradation, thus promoting p53/TP53-mediated apoptosis. Ubiquitination in nucleus by MDM2 in normal conditions leads to proteasome degradation.

Its subcellular location is the cytoplasm. The protein localises to the nucleus. The catalysed reaction is L-seryl-[protein] + ATP = O-phospho-L-seryl-[protein] + ADP + H(+). The enzyme catalyses L-threonyl-[protein] + ATP = O-phospho-L-threonyl-[protein] + ADP + H(+). It catalyses the reaction L-tyrosyl-[protein] + ATP = O-phospho-L-tyrosyl-[protein] + ADP + H(+). Autophosphorylates on tyrosine residues. In terms of biological role, serine/threonine-protein kinase involved in the control of mitotic transition and the regulation of cellular growth and/or development. The polypeptide is Dual specificity tyrosine-phosphorylation-regulated kinase 2 (Gallus gallus (Chicken)).